A 196-amino-acid polypeptide reads, in one-letter code: Molybdenum cofactor guanylyltransferase (196 aa).

GTP contacts are provided by residues 10 to 12 (LAG), Lys-23, Asn-51, Asp-69, and Asp-99. Residue Asp-99 coordinates Mg(2+).

The protein belongs to the MobA family. In terms of assembly, monomer. The cofactor is Mg(2+).

The protein resides in the cytoplasm. It catalyses the reaction Mo-molybdopterin + GTP + H(+) = Mo-molybdopterin guanine dinucleotide + diphosphate. Functionally, transfers a GMP moiety from GTP to Mo-molybdopterin (Mo-MPT) cofactor (Moco or molybdenum cofactor) to form Mo-molybdopterin guanine dinucleotide (Mo-MGD) cofactor. The protein is Molybdenum cofactor guanylyltransferase of Shewanella loihica (strain ATCC BAA-1088 / PV-4).